The chain runs to 358 residues: Adenosine deaminase (358 aa).

H14 and H16 together coordinate Zn(2+). The substrate site is built by H16, D18, and G183. Residue H212 coordinates Zn(2+). The active-site Proton donor is the E215. D294 provides a ligand contact to Zn(2+). D295 lines the substrate pocket.

It belongs to the metallo-dependent hydrolases superfamily. Adenosine and AMP deaminases family. It depends on Zn(2+) as a cofactor.

Its subcellular location is the cell membrane. The protein resides in the cell junction. It is found in the cytoplasmic vesicle lumen. It localises to the cytoplasm. The protein localises to the lysosome. It catalyses the reaction adenosine + H2O + H(+) = inosine + NH4(+). It carries out the reaction 2'-deoxyadenosine + H2O + H(+) = 2'-deoxyinosine + NH4(+). Catalyzes the hydrolytic deamination of adenosine and 2-deoxyadenosine. Plays an important role in purine metabolism and in adenosine homeostasis. Modulates signaling by extracellular adenosine, and so contributes indirectly to cellular signaling events. May act as a positive regulator of T-cell coactivation. This Xenopus tropicalis (Western clawed frog) protein is Adenosine deaminase (ada).